The following is a 465-amino-acid chain: Serine hydroxymethyltransferase (465 aa).

N6-(pyridoxal phosphate)lysine is present on Lys241.

Belongs to the SHMT family. Homotetramer. Pyridoxal 5'-phosphate serves as cofactor. In terms of tissue distribution, highest expression in the ovary and testis. 6- to 7-fold lower expression in hemocyte, silk gland, midgut and fat body.

The catalysed reaction is (6R)-5,10-methylene-5,6,7,8-tetrahydrofolate + glycine + H2O = (6S)-5,6,7,8-tetrahydrofolate + L-serine. The protein operates within one-carbon metabolism; tetrahydrofolate interconversion. Interconversion of serine and glycine. The chain is Serine hydroxymethyltransferase (692975) from Bombyx mori (Silk moth).